We begin with the raw amino-acid sequence, 156 residues long: Lipoprotein signal peptidase (156 aa).

A run of 3 helical transmembrane segments spans residues 5–25, 64–84, and 89–109; these read FKFI…DQWV, YLHL…KTLL, and IAFG…FIHG. Catalysis depends on residues Asp-113 and Asp-130. The chain crosses the membrane as a helical span at residues 122–142; sequence NFAIFNVADVMINISVALILI.

Belongs to the peptidase A8 family.

It localises to the cell inner membrane. It catalyses the reaction Release of signal peptides from bacterial membrane prolipoproteins. Hydrolyzes -Xaa-Yaa-Zaa-|-(S,diacylglyceryl)Cys-, in which Xaa is hydrophobic (preferably Leu), and Yaa (Ala or Ser) and Zaa (Gly or Ala) have small, neutral side chains.. It functions in the pathway protein modification; lipoprotein biosynthesis (signal peptide cleavage). Functionally, this protein specifically catalyzes the removal of signal peptides from prolipoproteins. The protein is Lipoprotein signal peptidase of Campylobacter jejuni subsp. jejuni serotype O:6 (strain 81116 / NCTC 11828).